A 369-amino-acid chain; its full sequence is 3,7-dimethylxanthine N-methyltransferase TCS1 (369 aa).

Y24 contributes to the S-adenosyl-L-homocysteine binding site. Caffeine is bound at residue T31. 6 residues coordinate S-adenosyl-L-homocysteine: C66, N71, D103, L104, S138, and F139. Caffeine contacts are provided by Y156, H159, and W160. N177 is a Mg(2+) binding site. Caffeine is bound at residue R225. Mg(2+)-binding residues include D263, F265, and N266. F321 contacts caffeine.

Belongs to the methyltransferase superfamily. Type-7 methyltransferase family. Requires Mg(2+) as cofactor.

It carries out the reaction 1,7-dimethylxanthine + S-adenosyl-L-methionine = caffeine + S-adenosyl-L-homocysteine + H(+). The catalysed reaction is theobromine + S-adenosyl-L-methionine = caffeine + S-adenosyl-L-homocysteine + H(+). It catalyses the reaction 7-methylxanthine + S-adenosyl-L-methionine = theobromine + S-adenosyl-L-homocysteine + H(+). The protein operates within alkaloid biosynthesis. Functionally, involved in the biosynthesis of caffeine in cv. Puer. Involved in the biosynthesis of theacrine in cv. Kucha, a caffeine-like xanthine alkaloid with diverse beneficial biological activities including anti-depressive, sedative, and hypnotic activities, improving learning and memory, increasing exercise activity, and preventing nonalcoholic fatty liver disease. Catalyzes the conversion of 7-methylxanthine (7mX) to theobromine and of theobromine to caffeine. Has 3-N- and 1-N-methylation activity. The chain is 3,7-dimethylxanthine N-methyltransferase TCS1 from Camellia sinensis var. assamica (Assam tea).